The sequence spans 227 residues: PKHD-type hydroxylase GOX0559 (227 aa).

The 101-residue stretch at R78–S178 folds into the Fe2OG dioxygenase domain. H96, D98, and H159 together coordinate Fe cation. Position 169 (R169) interacts with 2-oxoglutarate.

It depends on Fe(2+) as a cofactor. The cofactor is L-ascorbate.

In Gluconobacter oxydans (strain 621H) (Gluconobacter suboxydans), this protein is PKHD-type hydroxylase GOX0559.